A 313-amino-acid polypeptide reads, in one-letter code: 4-diphosphocytidyl-2-C-methyl-D-erythritol kinase (313 aa).

Residue K10 is part of the active site. 95–105 serves as a coordination point for ATP; the sequence is PVTAGLGGGSS. Residue D136 is part of the active site. The disordered stretch occupies residues 289-313; sequence HPRVSPWRSPRSASSRSTRRSSRPT. Residues 292–304 show a composition bias toward low complexity; sequence VSPWRSPRSASSR.

Belongs to the GHMP kinase family. IspE subfamily.

The catalysed reaction is 4-CDP-2-C-methyl-D-erythritol + ATP = 4-CDP-2-C-methyl-D-erythritol 2-phosphate + ADP + H(+). It participates in isoprenoid biosynthesis; isopentenyl diphosphate biosynthesis via DXP pathway; isopentenyl diphosphate from 1-deoxy-D-xylulose 5-phosphate: step 3/6. Catalyzes the phosphorylation of the position 2 hydroxy group of 4-diphosphocytidyl-2C-methyl-D-erythritol. In Anaeromyxobacter dehalogenans (strain 2CP-1 / ATCC BAA-258), this protein is 4-diphosphocytidyl-2-C-methyl-D-erythritol kinase.